The sequence spans 120 residues: Protein VraC (120 aa).

In Staphylococcus epidermidis (strain ATCC 12228 / FDA PCI 1200), this protein is Protein VraC.